Reading from the N-terminus, the 263-residue chain is LIM and SH3 domain protein 1 (263 aa).

Met-1 is modified (N-acetylmethionine). The 61-residue stretch at 3–63 (PNCARCGKIV…NAHYPKQSFT (61 aa)) folds into the LIM zinc-binding domain. Lys-42 is subject to N6-acetyllysine. Nebulin repeat units follow at residues 64–95 (MVAD…KNKG) and 97–131 (GFSV…KSRM). Thr-68 carries the phosphothreonine modification. An N6-methyllysine modification is found at Lys-75. Ser-99 bears the Phosphoserine mark. A Phosphothreonine modification is found at Thr-104. The residue at position 112 (Lys-112) is an N6-succinyllysine. A phosphoserine mark is found at Ser-118 and Ser-134. Residues 122–207 (YHEEFEKSRM…QRSAPGGGGK (86 aa)) form a disordered region. A compositionally biased stretch (polar residues) spans 148 to 162 (DSSSYRRPTEQQQPQ). The region spanning 204–263 (GGGKRYRAVYDYSAADEDEVSFQDGDTIVNVQQIDDGWMYGTVERTGDTGMLPANYVEAI) is the SH3 domain.

Interacts with F-actin. Interacts with ANKRD54. Interacts with KBTBD10. Post-translationally, phosphorylated. As to expression, expressed in a wide range of tissues (but not the heart or skeletal muscle), the expression is specific for certain actin-rich cell types within these tissues. Expression is prominent in the cortical regions of ion-transporting duct cells in the pancreas, in the salivary parotid gland and in certain F-actin-rich cells in the distal tubule/collecting duct. In primary cultures of gastric fibroblasts, expression is mainly within the tips of lamellipodia and at the leading edges of membrane ruffles.

The protein resides in the cytoplasm. It is found in the cell cortex. It localises to the cytoskeleton. Its function is as follows. Plays an important role in the regulation of dynamic actin-based, cytoskeletal activities. Agonist-dependent changes in LASP1 phosphorylation may also serve to regulate actin-associated ion transport activities, not only in the parietal cell but also in certain other F-actin-rich secretory epithelial cell types. This Rattus norvegicus (Rat) protein is LIM and SH3 domain protein 1.